We begin with the raw amino-acid sequence, 158 residues long: Frataxin homolog, mitochondrial (158 aa).

The protein belongs to the frataxin family. Monomer. Oligomer.

Its subcellular location is the mitochondrion. The catalysed reaction is 4 Fe(2+) + O2 + 4 H(+) = 4 Fe(3+) + 2 H2O. In terms of biological role, promotes the biosynthesis of heme as well as the assembly and repair of iron-sulfur clusters by delivering Fe(2+) to proteins involved in these pathways. May play a role in the protection against iron-catalyzed oxidative stress through its ability to catalyze the oxidation of Fe(2+) to Fe(3+). May be able to store large amounts of the metal in the form of a ferrihydrite mineral by oligomerization. This is Frataxin homolog, mitochondrial from Schizosaccharomyces pombe (strain 972 / ATCC 24843) (Fission yeast).